We begin with the raw amino-acid sequence, 88 residues long: CRISPR-associated endoribonuclease Cas2 3 (88 aa).

A Mg(2+)-binding site is contributed by Asp9.

It belongs to the CRISPR-associated endoribonuclease Cas2 protein family. As to quaternary structure, homodimer, forms a heterotetramer with a Cas1 homodimer. It depends on Mg(2+) as a cofactor.

Its function is as follows. CRISPR (clustered regularly interspaced short palindromic repeat), is an adaptive immune system that provides protection against mobile genetic elements (viruses, transposable elements and conjugative plasmids). CRISPR clusters contain sequences complementary to antecedent mobile elements and target invading nucleic acids. CRISPR clusters are transcribed and processed into CRISPR RNA (crRNA). Functions as a ssRNA-specific endoribonuclease. Involved in the integration of spacer DNA into the CRISPR cassette. The sequence is that of CRISPR-associated endoribonuclease Cas2 3 from Thermodesulfovibrio yellowstonii (strain ATCC 51303 / DSM 11347 / YP87).